We begin with the raw amino-acid sequence, 264 residues long: Anamorsin homolog 2 (264 aa).

The interval 1–142 (MAATAAALAV…KVSWSMGSSF (142 aa)) is N-terminal SAM-like domain. Residues 143–174 (PLKKATKGLPKIQIDDDSELIDEDSLLTEDDL) are linker. Residues Cys-185, Cys-194, Cys-197, and Cys-199 each contribute to the [2Fe-2S] cluster site. Residues 185 to 199 (CEVGATRKACKNCTC) are fe-S binding site A. Residues Cys-225, Cys-228, Cys-236, and Cys-239 each coordinate [4Fe-4S] cluster. 2 consecutive short sequence motifs (cx2C motif) follow at residues 225-228 (CGNC) and 236-239 (CGTC). The interval 225 to 239 (CGNCGLGDAFRCGTC) is fe-S binding site B.

It belongs to the anamorsin family. As to quaternary structure, monomer. The cofactor is [2Fe-2S] cluster. Requires [4Fe-4S] cluster as cofactor.

It is found in the cytoplasm. The protein localises to the mitochondrion intermembrane space. Component of the cytosolic iron-sulfur (Fe-S) protein assembly (CIA) machinery. Required for the maturation of extramitochondrial Fe-S proteins. Part of an electron transfer chain functioning in an early step of cytosolic Fe-S biogenesis, facilitating the de novo assembly of a [4Fe-4S] cluster on the cytosolic Fe-S scaffold complex. Electrons are transferred from NADPH via a FAD- and FMN-containing diflavin oxidoreductase. Together with the diflavin oxidoreductase, also required for the assembly of the diferric tyrosyl radical cofactor of ribonucleotide reductase (RNR), probably by providing electrons for reduction during radical cofactor maturation in the catalytic small subunit. This Oryza sativa subsp. indica (Rice) protein is Anamorsin homolog 2.